Reading from the N-terminus, the 118-residue chain is Basic phospholipase A2 2 (118 aa).

Disulfide bonds link Cys11–Cys71, Cys27–Cys117, Cys29–Cys45, Cys44–Cys98, Cys51–Cys91, Cys60–Cys84, and Cys78–Cys89. Ca(2+)-binding residues include Tyr28, Gly30, and Gly32. His48 is an active-site residue. Asp49 contributes to the Ca(2+) binding site. Asp92 is an active-site residue.

The protein belongs to the phospholipase A2 family. Group I subfamily. D49 sub-subfamily. Requires Ca(2+) as cofactor. Expressed by the venom gland.

The protein localises to the secreted. The enzyme catalyses a 1,2-diacyl-sn-glycero-3-phosphocholine + H2O = a 1-acyl-sn-glycero-3-phosphocholine + a fatty acid + H(+). Snake venom phospholipase A2 (PLA2) that inhibits neuromuscular transmission by blocking acetylcholine release from the nerve termini. PLA2 catalyzes the calcium-dependent hydrolysis of the 2-acyl groups in 3-sn-phosphoglycerides. This is Basic phospholipase A2 2 from Laticauda colubrina (Yellow-lipped sea krait).